The primary structure comprises 217 residues: 3-isopropylmalate dehydratase small subunit (217 aa).

The protein belongs to the LeuD family. LeuD type 1 subfamily. As to quaternary structure, heterodimer of LeuC and LeuD.

The catalysed reaction is (2R,3S)-3-isopropylmalate = (2S)-2-isopropylmalate. It functions in the pathway amino-acid biosynthesis; L-leucine biosynthesis; L-leucine from 3-methyl-2-oxobutanoate: step 2/4. Catalyzes the isomerization between 2-isopropylmalate and 3-isopropylmalate, via the formation of 2-isopropylmaleate. The protein is 3-isopropylmalate dehydratase small subunit of Paracidovorax citrulli (strain AAC00-1) (Acidovorax citrulli).